The chain runs to 307 residues: Probable deoxyhypusine synthase (307 aa).

Lys278 serves as the catalytic Nucleophile.

This sequence belongs to the deoxyhypusine synthase family. The cofactor is NAD(+).

The enzyme catalyses [eIF5A protein]-L-lysine + spermidine = [eIF5A protein]-deoxyhypusine + propane-1,3-diamine. The protein operates within protein modification; eIF5A hypusination. In terms of biological role, catalyzes the NAD-dependent oxidative cleavage of spermidine and the subsequent transfer of the butylamine moiety of spermidine to the epsilon-amino group of a specific lysine residue of the eIF-5A precursor protein to form the intermediate deoxyhypusine residue. The polypeptide is Probable deoxyhypusine synthase (dys) (Methanothermobacter thermautotrophicus (strain ATCC 29096 / DSM 1053 / JCM 10044 / NBRC 100330 / Delta H) (Methanobacterium thermoautotrophicum)).